The following is a 630-amino-acid chain: Phosphomethylpyrimidine synthase (630 aa).

2 disordered regions span residues 1–22 and 97–120; these read MADI…TTGP and AQRE…VPAF. Substrate contacts are provided by residues Asn224, Met253, Tyr282, His318, 338-340, 379-382, and Glu418; these read SRG and DGLR. His422 contributes to the Zn(2+) binding site. Position 445 (Tyr445) interacts with substrate. Zn(2+) is bound at residue His486. Residues Cys566, Cys569, and Cys574 each contribute to the [4Fe-4S] cluster site.

Belongs to the ThiC family. As to quaternary structure, homodimer. [4Fe-4S] cluster serves as cofactor.

It carries out the reaction 5-amino-1-(5-phospho-beta-D-ribosyl)imidazole + S-adenosyl-L-methionine = 4-amino-2-methyl-5-(phosphooxymethyl)pyrimidine + CO + 5'-deoxyadenosine + formate + L-methionine + 3 H(+). It participates in cofactor biosynthesis; thiamine diphosphate biosynthesis. Catalyzes the synthesis of the hydroxymethylpyrimidine phosphate (HMP-P) moiety of thiamine from aminoimidazole ribotide (AIR) in a radical S-adenosyl-L-methionine (SAM)-dependent reaction. This is Phosphomethylpyrimidine synthase from Sphingopyxis alaskensis (strain DSM 13593 / LMG 18877 / RB2256) (Sphingomonas alaskensis).